Reading from the N-terminus, the 322-residue chain is tRNA-dihydrouridine synthase B (322 aa).

Residues 16–18 (PMA) and Q70 each bind FMN. C100 (proton donor) is an active-site residue. FMN is bound by residues K139, 200-202 (NGD), and 224-225 (GR).

This sequence belongs to the Dus family. DusB subfamily. The cofactor is FMN.

It catalyses the reaction a 5,6-dihydrouridine in tRNA + NAD(+) = a uridine in tRNA + NADH + H(+). The enzyme catalyses a 5,6-dihydrouridine in tRNA + NADP(+) = a uridine in tRNA + NADPH + H(+). Functionally, catalyzes the synthesis of 5,6-dihydrouridine (D), a modified base found in the D-loop of most tRNAs, via the reduction of the C5-C6 double bond in target uridines. The polypeptide is tRNA-dihydrouridine synthase B (Vibrio vulnificus (strain CMCP6)).